The chain runs to 551 residues: Adenylosuccinate synthetase (551 aa).

GTP is bound by residues 131-137 (GDEGKGK) and 159-161 (GHT). Asp132 serves as the catalytic Proton acceptor. 2 residues coordinate Mg(2+): Asp132 and Gly159. IMP is bound by residues 132–135 (DEGK), 157–160 (NAGH), Thr248, Arg262, Asn339, Thr354, and Arg418. His160 (proton donor) is an active-site residue. 414-420 (TTTGRAR) is a substrate binding site. Residues Arg420, 446–448 (KLD), and 528–530 (GVG) each bind GTP.

The protein belongs to the adenylosuccinate synthetase family. As to quaternary structure, homodimer. It depends on Mg(2+) as a cofactor.

It localises to the cytoplasm. It carries out the reaction IMP + L-aspartate + GTP = N(6)-(1,2-dicarboxyethyl)-AMP + GDP + phosphate + 2 H(+). Its pathway is purine metabolism; AMP biosynthesis via de novo pathway; AMP from IMP: step 1/2. Functionally, plays an important role in the de novo pathway and in the salvage pathway of purine nucleotide biosynthesis. Catalyzes the first committed step in the biosynthesis of AMP from IMP. The polypeptide is Adenylosuccinate synthetase (Phytophthora infestans (strain T30-4) (Potato late blight agent)).